Consider the following 388-residue polypeptide: GTPase Obg (388 aa).

The 159-residue stretch at 1-159 (MKFVDEAVIR…RSLKLELLLL (159 aa)) folds into the Obg domain. Residues 160-333 (ADVGLLGMPN…LAAKLWDFIQ (174 aa)) form the OBG-type G domain. Residues 166–173 (GMPNAGKS), 191–195 (FTTLV), 213–216 (DIPG), 283–286 (NKAD), and 314–316 (SAY) contribute to the GTP site. Mg(2+) is bound by residues S173 and T193.

The protein belongs to the TRAFAC class OBG-HflX-like GTPase superfamily. OBG GTPase family. As to quaternary structure, monomer. Mg(2+) is required as a cofactor.

It localises to the cytoplasm. In terms of biological role, an essential GTPase which binds GTP, GDP and possibly (p)ppGpp with moderate affinity, with high nucleotide exchange rates and a fairly low GTP hydrolysis rate. Plays a role in control of the cell cycle, stress response, ribosome biogenesis and in those bacteria that undergo differentiation, in morphogenesis control. This is GTPase Obg from Shewanella oneidensis (strain ATCC 700550 / JCM 31522 / CIP 106686 / LMG 19005 / NCIMB 14063 / MR-1).